A 712-amino-acid polypeptide reads, in one-letter code: Polyribonucleotide nucleotidyltransferase (712 aa).

Mg(2+)-binding residues include Asp-487 and Asp-493. The 60-residue stretch at Pro-554 to Ile-613 folds into the KH domain. The 69-residue stretch at Gly-623–Lys-691 folds into the S1 motif domain.

The protein belongs to the polyribonucleotide nucleotidyltransferase family. Mg(2+) serves as cofactor.

Its subcellular location is the cytoplasm. The enzyme catalyses RNA(n+1) + phosphate = RNA(n) + a ribonucleoside 5'-diphosphate. Its function is as follows. Involved in mRNA degradation. Catalyzes the phosphorolysis of single-stranded polyribonucleotides processively in the 3'- to 5'-direction. The chain is Polyribonucleotide nucleotidyltransferase from Rhizobium leguminosarum bv. trifolii (strain WSM2304).